A 270-amino-acid polypeptide reads, in one-letter code: Fluoride-specific ion channel FluC 1 (270 aa).

4 helical membrane-spanning segments follow: residues 4–24 (IIIL…FIML), 35–55 (LDIL…TALY), 67–87 (IIGT…YGSV), and 96–116 (AFLI…VAVL). Gly-74 and Ser-77 together coordinate Na(+).

The protein belongs to the fluoride channel Fluc/FEX (TC 1.A.43) family.

It localises to the cell inner membrane. The enzyme catalyses fluoride(in) = fluoride(out). Na(+) is not transported, but it plays an essential structural role and its presence is essential for fluoride channel function. Functionally, fluoride-specific ion channel. Important for reducing fluoride concentration in the cell, thus reducing its toxicity. The chain is Fluoride-specific ion channel FluC 1 from Brucella abortus biovar 1 (strain 9-941).